Consider the following 252-residue polypeptide: Triosephosphate isomerase (252 aa).

Position 10 to 12 (Asn-10 to Lys-12) interacts with substrate. His-96 acts as the Electrophile in catalysis. Residue Glu-168 is the Proton acceptor of the active site. Residues Gly-174, Ser-213, and Gly-234–Gly-235 contribute to the substrate site.

Belongs to the triosephosphate isomerase family. As to quaternary structure, homodimer.

The protein resides in the cytoplasm. The enzyme catalyses D-glyceraldehyde 3-phosphate = dihydroxyacetone phosphate. The protein operates within carbohydrate biosynthesis; gluconeogenesis. It functions in the pathway carbohydrate degradation; glycolysis; D-glyceraldehyde 3-phosphate from glycerone phosphate: step 1/1. Functionally, involved in the gluconeogenesis. Catalyzes stereospecifically the conversion of dihydroxyacetone phosphate (DHAP) to D-glyceraldehyde-3-phosphate (G3P). The protein is Triosephosphate isomerase of Nitrosomonas eutropha (strain DSM 101675 / C91 / Nm57).